The chain runs to 379 residues: Chaperone protein DnaJ (379 aa).

The J domain maps to 5–69 (DYYEVLGISK…NKRATIDQFG (65 aa)). The CR-type zinc finger occupies 136 to 218 (GTTKEISIRK…CHGKGTENKT (83 aa)). Zn(2+) is bound by residues cysteine 149, cysteine 152, cysteine 166, cysteine 169, cysteine 192, cysteine 195, cysteine 206, and cysteine 209. 4 CXXCXGXG motif repeats span residues 149 to 156 (CETCHGDG), 166 to 173 (CSYCNGAG), 192 to 199 (CPKCNGSG), and 206 to 213 (CPTCHGKG).

Belongs to the DnaJ family. Homodimer. It depends on Zn(2+) as a cofactor.

It is found in the cytoplasm. In terms of biological role, participates actively in the response to hyperosmotic and heat shock by preventing the aggregation of stress-denatured proteins and by disaggregating proteins, also in an autonomous, DnaK-independent fashion. Unfolded proteins bind initially to DnaJ; upon interaction with the DnaJ-bound protein, DnaK hydrolyzes its bound ATP, resulting in the formation of a stable complex. GrpE releases ADP from DnaK; ATP binding to DnaK triggers the release of the substrate protein, thus completing the reaction cycle. Several rounds of ATP-dependent interactions between DnaJ, DnaK and GrpE are required for fully efficient folding. Also involved, together with DnaK and GrpE, in the DNA replication of plasmids through activation of initiation proteins. The sequence is that of Chaperone protein DnaJ from Staphylococcus aureus.